We begin with the raw amino-acid sequence, 521 residues long: Colicin-E1* (521 aa).

Disordered stretches follow at residues 26 to 52 (NGNP…AAIH) and 127 to 163 (SGCA…EKEQ). Gly residues predominate over residues 30–42 (DGSGSGGGGGTGG). Positions 133 to 145 (KQKKKPVKKRKRA) are enriched in basic residues. Positions 146-163 (EKSFQEAEQRRKEIEKEQ) are enriched in basic and acidic residues. Transmembrane regions (helical) follow at residues 470–486 (AVDA…FSVL) and 493–509 (IWGI…FIDK).

The protein belongs to the channel forming colicin family.

Its subcellular location is the cell membrane. In terms of biological role, this colicin is a channel-forming colicin. This class of transmembrane toxins depolarize the cytoplasmic membrane, leading to dissipation of cellular energy. Its function is as follows. Colicins are polypeptide toxins produced by and active against E.coli and closely related bacteria. The chain is Colicin-E1* (cea) from Shigella sonnei.